A 411-amino-acid chain; its full sequence is Tyrosine--tRNA ligase (411 aa).

Position 34 (tyrosine 34) interacts with L-tyrosine. Residues 39-48 carry the 'HIGH' region motif; it reads CTATSLHIGS. Residues tyrosine 171 and glutamine 175 each coordinate L-tyrosine. The 'KMSKS' region motif lies at 231 to 235; the sequence is KMGKT. Lysine 234 provides a ligand contact to ATP. The S4 RNA-binding domain maps to 345–411; that stretch reads ISAYELFHEA…GKKRHILVRV (67 aa).

This sequence belongs to the class-I aminoacyl-tRNA synthetase family. TyrS type 1 subfamily. Homodimer.

It is found in the cytoplasm. The enzyme catalyses tRNA(Tyr) + L-tyrosine + ATP = L-tyrosyl-tRNA(Tyr) + AMP + diphosphate + H(+). In terms of biological role, catalyzes the attachment of tyrosine to tRNA(Tyr) in a two-step reaction: tyrosine is first activated by ATP to form Tyr-AMP and then transferred to the acceptor end of tRNA(Tyr). In Rickettsia peacockii (strain Rustic), this protein is Tyrosine--tRNA ligase.